We begin with the raw amino-acid sequence, 144 residues long: Putative RNase YutE (144 aa).

R96 is an active-site residue. The RX(4)HXY motif signature appears at 96-103 (RKTLVQQY).

It belongs to the HepT RNase toxin family. In terms of assembly, homodimer, probably forms a complex with cognate antitoxin YutD.

Its function is as follows. Probable toxic component of a putative type VII toxin-antitoxin (TA) system, probably an RNase. Probably neutralized by cognate antitoxin YutD. The sequence is that of Putative RNase YutE (yutE) from Bacillus subtilis (strain 168).